Here is a 650-residue protein sequence, read N- to C-terminus: Laccase-like multicopper oxidase 1 (650 aa).

Residues Met1 to Ala20 form the signal peptide. Plastocyanin-like domains are found at residues Gln41–Asp151, Glu162–Asn360, and Lys439–Asp595. Cys46 and Cys254 are oxidised to a cystine. 2 N-linked (GlcNAc...) asparagine glycosylation sites follow: Asn55 and Asn83. Residues His87, His89, His133, and His135 each contribute to the Cu cation site. Cu cation contacts are provided by His501, His504, His506, His576, Cys577, His578, and His582. The N-linked (GlcNAc...) asparagine glycan is linked to Asn620.

It belongs to the multicopper oxidase family. In terms of assembly, monomer. In terms of processing, N-glycosylation Asn-55 and Asn-83 is involved in folding, conformational stability and laccase activity.

It carries out the reaction 2 2',3,4-trihydroxy-trans-chalcone + O2 + 2 H(+) = 2 3',4'-dihydroxyaurone + 2 H2O. Retains almost half of its activity in presence of high salt concentrations up to 100 mM NaCl. Retains also more than 85% of its original activity in the presence of 1 mM EDTA, indicating a satisfactory resistance towards chelators, which is rare among metal-containing enzyme. The activity drops significantly in the presence of NaN(3) or SDS. Appears more active in the presence of methanol compared to ethanol, but acetone or DMSO addition severely affect remaining laccase activity. Its function is as follows. Yellow laccase-like multicopper oxidase that is able to oxidize a variety of phenolic compounds including standard laccase substrates such as 2'-azino-bis(3-ethylbenzothiazoline-6-sulphonic acid) (ABTS) and 2,6-dimethoxyphenol (2,6-DMP). The existence of an ortho-hydroxy group is crucial for oxidation since pyrogallol and catechol, which contain ortho-hydroxy groups, are readily oxidized, which is not the case for resorcinol and hydroquinone, that contain meta- and para-hydroxy groups, respectively. The same is also true for the existence of a methoxy group in an ortho-position, since 2,6-DMP, guaiacol and ferulic and caffeic acids are also rather easily oxidized compared with the corresponding unsubstituted compound. Can be used for the bioconversion of 2',3,4-trihy-droxychalcone to 3',4'-dihydroxy-aurone, a bioactive aurone recently shown to possess inhibitory activity against several isoforms of the histone deacetylase complex (HDAC). The polypeptide is Laccase-like multicopper oxidase 1 (Thermothelomyces thermophilus (strain ATCC 42464 / BCRC 31852 / DSM 1799) (Sporotrichum thermophile)).